A 1190-amino-acid chain; its full sequence is Isoleucine--tRNA ligase, cytoplasmic (1190 aa).

Residues 49–59 (PFATGLPHYGH) carry the 'HIGH' region motif. The segment at 271-299 (DKPKAKLSNGPAGDTKKANPKAKGAKPES) is disordered. Positions 632–636 (KMAKK) match the 'KMSKS' region motif. Lys-635 contributes to the ATP binding site.

It belongs to the class-I aminoacyl-tRNA synthetase family.

The protein localises to the cytoplasm. The protein resides in the cytosol. It catalyses the reaction tRNA(Ile) + L-isoleucine + ATP = L-isoleucyl-tRNA(Ile) + AMP + diphosphate. The chain is Isoleucine--tRNA ligase, cytoplasmic from Arabidopsis thaliana (Mouse-ear cress).